Reading from the N-terminus, the 439-residue chain is Maintenance of mitochondrial morphology protein 1 (439 aa).

Topologically, residues 1–76 (MSQDLIETTA…NGNTWSFTQG (76 aa)) are lumenal. The chain crosses the membrane as a helical span at residues 77–97 (LVIGQVSVIFIIIVFVKFFVF). The Cytoplasmic segment spans residues 98–439 (ADSSSHIPTK…TPGEYVNSNI (342 aa)). Disordered regions lie at residues 125–145 (KHSN…SLDS), 309–336 (MNGY…DGGT), and 405–425 (REPV…GTSA). An SMP-LTD domain is found at 165–395 (ASESLDWFNV…EPRFQVVRLP (231 aa)). Composition is skewed to low complexity over residues 315–326 (ENANGDGASSSN) and 410–424 (KKTT…NGTS).

Belongs to the MMM1 family. In terms of assembly, homodimer. Component of the ER-mitochondria encounter structure (ERMES) or MDM complex, composed of MMM1, MDM10, MDM12 and MDM34. An MMM1 homodimer associates with one molecule of MDM12 on each side in a pairwise head-to-tail manner, and the SMP-LTD domains of MMM1 and MDM12 generate a continuous hydrophobic tunnel for phospholipid trafficking.

It is found in the endoplasmic reticulum membrane. Functionally, component of the ERMES/MDM complex, which serves as a molecular tether to connect the endoplasmic reticulum (ER) and mitochondria. Components of this complex are involved in the control of mitochondrial shape and protein biogenesis, and function in nonvesicular lipid trafficking between the ER and mitochondria. The MDM12-MMM1 subcomplex functions in the major beta-barrel assembly pathway that is responsible for biogenesis of all outer membrane beta-barrel proteins, and acts in a late step after the SAM complex. The MDM10-MDM12-MMM1 subcomplex further acts in the TOM40-specific pathway after the action of the MDM12-MMM1 complex. Essential for establishing and maintaining the structure of mitochondria and maintenance of mtDNA nucleoids. In Candida albicans (strain SC5314 / ATCC MYA-2876) (Yeast), this protein is Maintenance of mitochondrial morphology protein 1.